The following is a 251-amino-acid chain: Triosephosphate isomerase (251 aa).

9–11 (NWK) is a substrate binding site. Histidine 94 functions as the Electrophile in the catalytic mechanism. Glutamate 163 functions as the Proton acceptor in the catalytic mechanism. Residues glycine 169, serine 209, and 230–231 (GG) contribute to the substrate site.

This sequence belongs to the triosephosphate isomerase family. In terms of assembly, homodimer.

The protein localises to the cytoplasm. It carries out the reaction D-glyceraldehyde 3-phosphate = dihydroxyacetone phosphate. The protein operates within carbohydrate biosynthesis; gluconeogenesis. It participates in carbohydrate degradation; glycolysis; D-glyceraldehyde 3-phosphate from glycerone phosphate: step 1/1. Involved in the gluconeogenesis. Catalyzes stereospecifically the conversion of dihydroxyacetone phosphate (DHAP) to D-glyceraldehyde-3-phosphate (G3P). This chain is Triosephosphate isomerase, found in Dehalococcoides mccartyi (strain ATCC BAA-2266 / KCTC 15142 / 195) (Dehalococcoides ethenogenes (strain 195)).